We begin with the raw amino-acid sequence, 460 residues long: Diguanylate cyclase DosC (460 aa).

Residue His98 participates in heme binding. A GGDEF domain is found at 325 to 458 (TPLSVLIIDV…GRNRVELWKA (134 aa)). Mg(2+) is bound at residue Asp333. Positions 341 and 350 each coordinate substrate. Asp376 contacts Mg(2+). The active-site Proton acceptor is the Asp376.

The cofactor is heme. Mg(2+) serves as cofactor.

It carries out the reaction 2 GTP = 3',3'-c-di-GMP + 2 diphosphate. It functions in the pathway purine metabolism; 3',5'-cyclic di-GMP biosynthesis. Globin-coupled heme-based oxygen sensor protein displaying diguanylate cyclase (DGC) activity in response to oxygen availability. Thus, catalyzes the synthesis of cyclic diguanylate (c-di-GMP) via the condensation of 2 GTP molecules. Cyclic-di-GMP is a second messenger which controls cell surface-associated traits in bacteria. The chain is Diguanylate cyclase DosC (dosC) from Escherichia coli O157:H7.